An 87-amino-acid chain; its full sequence is Small ribosomal subunit protein bS16 (87 aa).

The protein belongs to the bacterial ribosomal protein bS16 family.

This Fusobacterium nucleatum subsp. nucleatum (strain ATCC 25586 / DSM 15643 / BCRC 10681 / CIP 101130 / JCM 8532 / KCTC 2640 / LMG 13131 / VPI 4355) protein is Small ribosomal subunit protein bS16.